A 422-amino-acid polypeptide reads, in one-letter code: Probable glycosidase CRR1 (422 aa).

Positions 1 to 20 are cleaved as a signal peptide; that stretch reads MRISILQLVPVVGYIGFALG. The region spanning 67–339 is the GH16 domain; that stretch reads DEESCAPIPA…WENSPDIIEK (273 aa). Glu217 acts as the Nucleophile in catalysis. Glu221 acts as the Proton donor in catalysis.

This sequence belongs to the glycosyl hydrolase 16 family. CRR1 subfamily.

The protein resides in the spore wall. Its function is as follows. Spore specific glycosidase involved in spore wall assembly during sporulation. May be involved in copper import. The polypeptide is Probable glycosidase CRR1 (CRR1) (Saccharomyces cerevisiae (strain ATCC 204508 / S288c) (Baker's yeast)).